Reading from the N-terminus, the 621-residue chain is 1-deoxy-D-xylulose-5-phosphate synthase (621 aa).

Residues His-80 and 121-123 (GHS) each bind thiamine diphosphate. Asp-152 contributes to the Mg(2+) binding site. Thiamine diphosphate is bound by residues 153-154 (GA), Asn-181, Tyr-288, and Glu-370. Residue Asn-181 coordinates Mg(2+).

It belongs to the transketolase family. DXPS subfamily. Homodimer. The cofactor is Mg(2+). Thiamine diphosphate serves as cofactor.

The enzyme catalyses D-glyceraldehyde 3-phosphate + pyruvate + H(+) = 1-deoxy-D-xylulose 5-phosphate + CO2. It functions in the pathway metabolic intermediate biosynthesis; 1-deoxy-D-xylulose 5-phosphate biosynthesis; 1-deoxy-D-xylulose 5-phosphate from D-glyceraldehyde 3-phosphate and pyruvate: step 1/1. In terms of biological role, catalyzes the acyloin condensation reaction between C atoms 2 and 3 of pyruvate and glyceraldehyde 3-phosphate to yield 1-deoxy-D-xylulose-5-phosphate (DXP). This chain is 1-deoxy-D-xylulose-5-phosphate synthase, found in Shewanella frigidimarina (strain NCIMB 400).